The sequence spans 244 residues: 5-oxoprolinase subunit A (244 aa).

The protein belongs to the LamB/PxpA family. In terms of assembly, forms a complex composed of PxpA, PxpB and PxpC.

It catalyses the reaction 5-oxo-L-proline + ATP + 2 H2O = L-glutamate + ADP + phosphate + H(+). Functionally, catalyzes the cleavage of 5-oxoproline to form L-glutamate coupled to the hydrolysis of ATP to ADP and inorganic phosphate. The chain is 5-oxoprolinase subunit A from Escherichia coli (strain SMS-3-5 / SECEC).